Here is a 92-residue protein sequence, read N- to C-terminus: Bombyxin A-5 (92 aa).

An N-terminal signal peptide occupies residues 1 to 19; sequence MKLLLAIALMLTTVMWAST. Gln-20 carries the pyrrolidone carboxylic acid modification. Intrachain disulfides connect Cys-29–Cys-79, Cys-41–Cys-92, and Cys-78–Cys-83. The propeptide at 50–71 is c peptide like; sequence SDAQFASYGSAWLMPYSEGRDQ.

It belongs to the insulin family. As to quaternary structure, heterodimer of a B chain and an A chain linked by two disulfide bonds.

Its subcellular location is the secreted. In terms of biological role, brain peptide responsible for activation of prothoracic glands to produce ecdysone in insects. The polypeptide is Bombyxin A-5 (BBXA5) (Bombyx mori (Silk moth)).